Consider the following 334-residue polypeptide: Glycerol-3-phosphate dehydrogenase [NAD(P)+] (334 aa).

Residues Trp13, Arg33, and Lys106 each contribute to the NADPH site. Lys106, Gly137, and Ser139 together coordinate sn-glycerol 3-phosphate. Residue Ala141 participates in NADPH binding. 5 residues coordinate sn-glycerol 3-phosphate: Lys192, Asp245, Ser255, Arg256, and Asn257. Lys192 functions as the Proton acceptor in the catalytic mechanism. An NADPH-binding site is contributed by Arg256. Residues Val280 and Glu282 each contribute to the NADPH site.

Belongs to the NAD-dependent glycerol-3-phosphate dehydrogenase family.

It localises to the cytoplasm. The catalysed reaction is sn-glycerol 3-phosphate + NAD(+) = dihydroxyacetone phosphate + NADH + H(+). It carries out the reaction sn-glycerol 3-phosphate + NADP(+) = dihydroxyacetone phosphate + NADPH + H(+). It participates in membrane lipid metabolism; glycerophospholipid metabolism. Functionally, catalyzes the reduction of the glycolytic intermediate dihydroxyacetone phosphate (DHAP) to sn-glycerol 3-phosphate (G3P), the key precursor for phospholipid synthesis. The polypeptide is Glycerol-3-phosphate dehydrogenase [NAD(P)+] (Chlamydia trachomatis serovar A (strain ATCC VR-571B / DSM 19440 / HAR-13)).